The chain runs to 338 residues: L-asparaginase 1 (338 aa).

In terms of domain architecture, Asparaginase/glutaminase spans 4–329 (KSIYVAYTGG…ETIRKAMSQN (326 aa)). The active-site O-isoaspartyl threonine intermediate is threonine 14. Residues 59 to 61 (DSS) and 91 to 92 (TD) each bind substrate.

The protein belongs to the asparaginase 1 family. As to quaternary structure, homotetramer.

The protein localises to the cytoplasm. The enzyme catalyses L-asparagine + H2O = L-aspartate + NH4(+). This chain is L-asparaginase 1 (ansA), found in Escherichia coli O157:H7.